A 2784-amino-acid chain; its full sequence is Cilia- and flagella-associated protein 46 (2784 aa).

A TPR 1 repeat occupies 129-162; that stretch reads GLEVAAANQPRYQFLVYNASVHHWRVVAPLHRDG. The stretch at 242–268 forms a coiled coil; it reads TAAAAKLTELQKDVARLQVHLATLAAA. The TPR 2 repeat unit spans residues 401–434; sequence SLAPVVVAAHVKALEQLEDVLTTFTKLADVEGIH. 2 disordered regions span residues 543 to 562 and 581 to 607; these read SAEP…RSKE and RDLP…AAAR. Residues 585–595 show a composition bias toward pro residues; the sequence is HPPPPAPTDPP. Residues 644–665 adopt a coiled-coil conformation; it reads AVDREMVLLQAQLAHYEAEAAI. Residues 670-697 form a disordered region; sequence RRRADISPPTRPSPPEVDGEGVRQPPAT. A TPR 3 repeat occupies 708–743; it reads ASVRSMRGAMSVNEPWLTLNNAVQLYNAALPLMQQH. Disordered regions lie at residues 799–837 and 929–954; these read DAGQ…PAYK and RVNE…KPHG. Residues 802 to 817 are compositionally biased toward acidic residues; the sequence is QELEDDDDEDSLDEDG. The stretch at 976 to 1009 is one TPR 4 repeat; it reads LELWAKMARAVADAGVWPAALECSAAALAALPGA. The segment covering 1275-1288 has biased composition (acidic residues); sequence TGDLDGDGTDDEDD. Disordered regions lie at residues 1275 to 1351 and 1640 to 1673; these read TGDL…RVPE and AAGG…HGQL. Gly residues predominate over residues 1298 to 1311; it reads SGGGSSSGRAGGGF. The segment covering 1646 to 1658 has biased composition (basic and acidic residues); sequence GGRESPSPHDDGI. TPR repeat units follow at residues 1712–1745 and 1854–1886; these read HDVW…AADC and MEML…LAAR. Positions 1961 to 1984 form a coiled coil; sequence RLAEVQLAAAEERERLAGADREKA. Disordered stretches follow at residues 2068-2112, 2278-2303, 2346-2389, and 2441-2465; these read RPFV…EAAA, ATAE…PAAA, AAKG…PGAA, and LPLP…AGPT. Residues 2069–2083 are compositionally biased toward pro residues; sequence PFVPPPKPPGAPKRP. Over residues 2087–2096 the composition is skewed to acidic residues; the sequence is AEEEEDEEGP. Low complexity predominate over residues 2097–2112; it reads DTAAADAAAEAAEAAA. Positions 2378 to 2389 are enriched in low complexity; the sequence is SKQGPKSGPGAA. A compositionally biased stretch (basic and acidic residues) spans 2450–2461; it reads DGKKEKKDKKEA. The TPR 7 repeat unit spans residues 2613-2646; the sequence is ATGGPCTGLLFLGVGRFAAHVPPAVLASAPLGGC.

Belongs to the CFAP46 family. Part of the PDCP1 complex composed of CFAP46, CFAP54, CFAP74 and CFAP221; the PDCP1 complex binds calmodulin.

The protein localises to the cytoplasm. It localises to the cytoskeleton. The protein resides in the cilium axoneme. As part of the central apparatus of the cilium axoneme plays a role in cilium movement and thereby cell motility. The sequence is that of Cilia- and flagella-associated protein 46 from Chlamydomonas reinhardtii (Chlamydomonas smithii).